Consider the following 492-residue polypeptide: Glycylpeptide N-tetradecanoyltransferase 2 (492 aa).

The tract at residues 1–77 (MAEDSESAAS…SASDSQEIKN (77 aa)) is disordered. Residues 15–32 (ELDDQDTCGIDGDNEEEN) show a composition bias toward acidic residues. Basic residues predominate over residues 46–57 (KKKKKKQKRKKE). Residues 61-72 (SGGTKSDSASDS) show a composition bias toward polar residues. Tetradecanoyl-CoA-binding residues include His111, Trp116, Leu244, Val246, Ser252, Arg254, Val255, and Ala256.

The protein belongs to the NMT family.

Its subcellular location is the cytoplasm. The protein localises to the membrane. It carries out the reaction N-terminal glycyl-[protein] + tetradecanoyl-CoA = N-tetradecanoylglycyl-[protein] + CoA + H(+). The catalysed reaction is N-terminal glycyl-L-lysyl-[protein] + tetradecanoyl-CoA = N-terminal glycyl-(N(6)-tetradecanoyl)-L-lysyl-[protein] + CoA + H(+). Adds a myristoyl group to the N-terminal glycine residue of certain cellular and viral proteins. Also able to mediate N-terminal lysine myristoylation of proteins. This Danio rerio (Zebrafish) protein is Glycylpeptide N-tetradecanoyltransferase 2.